We begin with the raw amino-acid sequence, 448 residues long: Gamma conglutin 2 (448 aa).

The signal sequence occupies residues 1–33 (MAKNMAQIFPFIAVFLSCSFIFVLSSSQNSQSL). In terms of domain architecture, Peptidase A1 spans 63–428 (HWANIHKRTP…DLERSRVEFN (366 aa)). 5 cysteine pairs are disulfide-bonded: cysteine 91-cysteine 181, cysteine 105-cysteine 118, cysteine 110-cysteine 136, cysteine 121-cysteine 131, and cysteine 349-cysteine 390. N-linked (GlcNAc...) asparagine glycosylation is present at asparagine 133.

The protein belongs to the peptidase A1 family. As to quaternary structure, two-subunit monomeric unit made of alpha and beta subunits coupled by disulfide bonds (at pH 4.5 and under non-reducing conditions). Can also form oligomers including dimer, tetramer and cyclic hexamer (trimer of dimers) (at pH &gt; 5.5). Component of globulins complexes which accumulate in seeds. Interacts with flavonoids (e.g. apigenin glucosides) present in globulins complexes. In terms of processing, glycosylated on alpha chain. In terms of tissue distribution, expressed in developing seeds and in the young roots and cotyledons of germinating seeds and young seedlings.

It is found in the secreted. The protein resides in the extracellular space. Its function is as follows. Sulfur-rich seed storage protein that remains undegraded at germination. The polypeptide is Gamma conglutin 2 (Lupinus albus (White lupine)).